Here is a 107-residue protein sequence, read N- to C-terminus: Replication restart protein PriB (107 aa).

Positions 8-107 constitute an SSB domain; that stretch reads IENRLSLIGV…LHAEHIELLD (100 aa).

This sequence belongs to the PriB family. As to quaternary structure, homodimer. Interacts with PriA and DnaT. Component of the replication restart primosome. Primosome assembly occurs via a 'hand-off' mechanism. PriA binds to replication forks, subsequently PriB then DnaT bind; DnaT then displaces ssDNA to generate the helicase loading substrate.

Its function is as follows. Involved in the restart of stalled replication forks, which reloads the replicative helicase on sites other than the origin of replication; the PriA-PriB pathway is the major replication restart pathway. During primosome assembly it facilitates complex formation between PriA and DnaT on DNA; stabilizes PriA on DNA. Stimulates the DNA unwinding activity of PriA helicase. The protein is Replication restart protein PriB of Actinobacillus succinogenes (strain ATCC 55618 / DSM 22257 / CCUG 43843 / 130Z).